A 310-amino-acid chain; its full sequence is Terpene synthase 6 (310 aa).

The DDxx(x)D/E motif signature appears at 93-98 (DDFYFE). Residues 222 to 230 (NDCYSFNKE) carry the NDxxSxxxD/E motif motif.

This sequence belongs to the terpene synthase family.

The enzyme catalyses (2E,6E)-farnesyl diphosphate = (E)-beta-farnesene + diphosphate. The catalysed reaction is (2E,6E)-farnesyl diphosphate = (1S,2S,4R)-beta-elemene + diphosphate. It carries out the reaction (2E,6E)-farnesyl diphosphate = (3E,6E)-alpha-farnesene + diphosphate. Its function is as follows. Terpene synthase that converts its substrate farnesyl diphosphate (FPP) into the sesquiterpenes beta-elemene, (E)-beta-farnesene and (E,E)-alpha-farnesene. The polypeptide is Terpene synthase 6 (Dictyostelium purpureum (Slime mold)).